Here is a 144-residue protein sequence, read N- to C-terminus: 3-hydroxyacyl-[acyl-carrier-protein] dehydratase FabZ (144 aa).

His48 is an active-site residue.

This sequence belongs to the thioester dehydratase family. FabZ subfamily.

The protein resides in the cytoplasm. It catalyses the reaction a (3R)-hydroxyacyl-[ACP] = a (2E)-enoyl-[ACP] + H2O. Its function is as follows. Involved in unsaturated fatty acids biosynthesis. Catalyzes the dehydration of short chain beta-hydroxyacyl-ACPs and long chain saturated and unsaturated beta-hydroxyacyl-ACPs. This is 3-hydroxyacyl-[acyl-carrier-protein] dehydratase FabZ from Listeria monocytogenes serotype 4b (strain CLIP80459).